A 276-amino-acid polypeptide reads, in one-letter code: Protein MGF 360-15R (276 aa).

Belongs to the asfivirus MGF 360 family.

Functionally, plays a role in virus cell tropism, and may be required for efficient virus replication in macrophages. The chain is Protein MGF 360-15R from African swine fever virus (isolate Tick/South Africa/Pretoriuskop Pr4/1996) (ASFV).